A 141-amino-acid chain; its full sequence is Hemoglobin subunit alpha-D (141 aa).

In terms of domain architecture, Globin spans 1–141; that stretch reads MLTADDKKLI…VASVLAEKYR (141 aa). Heme b is bound by residues His58 and His87.

Belongs to the globin family. As to quaternary structure, heterotetramer of two alpha-D chains and two beta chains. As to expression, red blood cells.

In terms of biological role, involved in oxygen transport from the lung to the various peripheral tissues. The chain is Hemoglobin subunit alpha-D (HBAD) from Rhea americana (Greater rhea).